Reading from the N-terminus, the 305-residue chain is Tyrosine recombinase XerC (305 aa).

Positions 4–95 (TSIQELINKW…AVKNFYKFLE (92 aa)) constitute a Core-binding (CB) domain. Positions 116-298 (LLPKSLSEDD…SIKHLVSVYT (183 aa)) constitute a Tyr recombinase domain. Catalysis depends on residues R159, K182, H250, R253, and H276. Catalysis depends on Y285, which acts as the O-(3'-phospho-DNA)-tyrosine intermediate.

This sequence belongs to the 'phage' integrase family. XerC subfamily. As to quaternary structure, forms a cyclic heterotetrameric complex composed of two molecules of XerC and two molecules of XerD.

It localises to the cytoplasm. Functionally, site-specific tyrosine recombinase, which acts by catalyzing the cutting and rejoining of the recombining DNA molecules. The XerC-XerD complex is essential to convert dimers of the bacterial chromosome into monomers to permit their segregation at cell division. It also contributes to the segregational stability of plasmids. In Rickettsia canadensis (strain McKiel), this protein is Tyrosine recombinase XerC.